A 352-amino-acid polypeptide reads, in one-letter code: WAT1-related protein At1g11450 (352 aa).

Helical transmembrane passes span 14 to 34 (WPPMIVMVTSQVAMGSVNALV), 46 to 66 (IIGAYRMAISSFILVPIAYFL), 83 to 103 (FISGLLGASLMQFFYLLGLSY), 107 to 127 (TVACALVSLMPAITFAFALIL), 139 to 159 (AGMIKVMGTLICISGALFLTF), 187 to 207 (WLLGCLYLVIGIVLLSLWILF), 219 to 239 (FSSTCLMSIFAAFQCALLSLY), 253 to 273 (FVIGVIIYAGVIGQAMSTVAA), 283 to 303 (VFASAIMPVSLISATLFDFLI), and 308 to 328 (LYLGSVIGSVGTIIGLYVFLW). 2 consecutive EamA domains span residues 27–157 (MGSV…ALFL) and 192–335 (LYLV…KETE).

The protein belongs to the drug/metabolite transporter (DMT) superfamily. Plant drug/metabolite exporter (P-DME) (TC 2.A.7.4) family.

Its subcellular location is the membrane. The sequence is that of WAT1-related protein At1g11450 from Arabidopsis thaliana (Mouse-ear cress).